A 910-amino-acid chain; its full sequence is Valine--tRNA ligase (910 aa).

Residues Pro45–His55 carry the 'HIGH' region motif. The 'KMSKS' region signature appears at Lys554 to Ser558. An ATP-binding site is contributed by Lys557. The stretch at Asp842–Ser910 forms a coiled coil.

Belongs to the class-I aminoacyl-tRNA synthetase family. ValS type 1 subfamily. In terms of assembly, monomer.

Its subcellular location is the cytoplasm. It catalyses the reaction tRNA(Val) + L-valine + ATP = L-valyl-tRNA(Val) + AMP + diphosphate. Functionally, catalyzes the attachment of valine to tRNA(Val). As ValRS can inadvertently accommodate and process structurally similar amino acids such as threonine, to avoid such errors, it has a 'posttransfer' editing activity that hydrolyzes mischarged Thr-tRNA(Val) in a tRNA-dependent manner. The chain is Valine--tRNA ligase from Brucella suis biovar 1 (strain 1330).